Consider the following 761-residue polypeptide: Cyclin-D-binding Myb-like transcription factor 1 (761 aa).

An interaction with CCND2 region spans residues 1–237 (MSTVEEDSDT…TPEEIEKLKE (237 aa)). The interval 24-51 (DTDGNLILHCPQNDPDEVDSEDSTEPPH) is disordered. Residues 37 to 47 (DPDEVDSEDST) show a composition bias toward acidic residues. Positions 87–170 (VTMTATTEVA…IDILMNNIER (84 aa)) are required for transcriptional activation. The segment at 87–458 (VTMTATTEVA…DNTAISPSPM (372 aa)) is required for DNA-binding. Residues 176-761 (GIKDATEIIF…KDVEDLVNCH (586 aa)) are interaction with CCND1, CCND2 and CCND3. The Myb-like 1 domain maps to 225 to 263 (GKYTPEEIEKLKELRIKHGNDWATIGAALGRSASSVKDR). In terms of domain architecture, HTH myb-type spans 268–333 (KDTCNTGKWT…KWLNYLNWKQ (66 aa)). The segment at residues 306 to 329 (WAAVAERVGTRSEKQCRSKWLNYL) is a DNA-binding region (H-T-H motif). In terms of domain architecture, Myb-like 2 spans 339–388 (WTKEDEINLILRIAELDVADENDINWDLLAEGWSSVRSPQWLRSKWWTIK). The segment at 459 to 761 (AALQIPVQIT…KDVEDLVNCH (303 aa)) is required for transcriptional activation. Disordered regions lie at residues 584–625 (SLSQ…MTIQ) and 740–761 (GSSLGSPVSEDSKDVEDLVNCH).

It belongs to the DMTF1 family. Interacts with the D-type cyclins CCND1, CCND2 and CCND3. Interaction with D-type cyclins may modulate transcriptional activation by this protein. Phosphorylated by the cyclin-D2/CDK4, cyclin-D3/CDK4 and cyclin-D2/CDK6 complexes and to a lesser extent by the cyclin-D1/CDK4 complex. In terms of tissue distribution, ubiquitously expressed (at mRNA level). Expressed in brain, intestine, kidney, lung, pancreas, skin, spleen and tongue (at protein level). Expressed at high levels in testis and thymus (at protein level). In all tissues examined, expression is predominant in non-proliferating and differentiated cell types. These include epithelial, interstitial and smooth muscle cells of the intestine, differentiated spermatids, sperm and interstitial cells of the testis, and lymphoid cells of the medullary compartment of the thymus.

It is found in the nucleus. Functionally, transcriptional activator which activates the CDKN2A/ARF locus in response to Ras-Raf signaling, thereby promoting p53/TP53-dependent growth arrest. May also cooperate with MYB to activate transcription of the ANPEP gene. Binds to the consensus sequence 5'-CCCG[GT]ATGT-3'. This chain is Cyclin-D-binding Myb-like transcription factor 1 (Dmtf1), found in Mus musculus (Mouse).